Reading from the N-terminus, the 364-residue chain is Carbamoyl phosphate synthase small chain (364 aa).

2 CPSase regions span residues 1–167 (MKRQ…PSPG) and 1–171 (MKRQ…RGER). Positions 45, 219, and 221 each coordinate L-glutamine. Positions 171–358 (RIVLIDFGMK…LALIREFNKK (188 aa)) constitute a Glutamine amidotransferase type-1 domain. Cysteine 246 acts as the Nucleophile in catalysis. Positions 247, 250, 288, 290, and 291 each coordinate L-glutamine. Active-site residues include histidine 331 and glutamate 333.

It belongs to the CarA family. Composed of two chains; the small (or glutamine) chain promotes the hydrolysis of glutamine to ammonia, which is used by the large (or ammonia) chain to synthesize carbamoyl phosphate. Tetramer of heterodimers (alpha,beta)4.

It catalyses the reaction hydrogencarbonate + L-glutamine + 2 ATP + H2O = carbamoyl phosphate + L-glutamate + 2 ADP + phosphate + 2 H(+). It carries out the reaction L-glutamine + H2O = L-glutamate + NH4(+). It functions in the pathway amino-acid biosynthesis; L-arginine biosynthesis; carbamoyl phosphate from bicarbonate: step 1/1. It participates in pyrimidine metabolism; UMP biosynthesis via de novo pathway; (S)-dihydroorotate from bicarbonate: step 1/3. Its function is as follows. Small subunit of the glutamine-dependent carbamoyl phosphate synthetase (CPSase). CPSase catalyzes the formation of carbamoyl phosphate from the ammonia moiety of glutamine, carbonate, and phosphate donated by ATP, constituting the first step of 2 biosynthetic pathways, one leading to arginine and/or urea and the other to pyrimidine nucleotides. The small subunit (glutamine amidotransferase) binds and cleaves glutamine to supply the large subunit with the substrate ammonia. In Bacillus caldolyticus, this protein is Carbamoyl phosphate synthase small chain.